Here is a 238-residue protein sequence, read N- to C-terminus: Pyridoxine 5'-phosphate synthase (238 aa).

Asn-9 serves as a coordination point for 3-amino-2-oxopropyl phosphate. Residue 11–12 participates in 1-deoxy-D-xylulose 5-phosphate binding; the sequence is DH. Arg-20 lines the 3-amino-2-oxopropyl phosphate pocket. His-45 serves as the catalytic Proton acceptor. 2 residues coordinate 1-deoxy-D-xylulose 5-phosphate: Arg-47 and His-52. Glu-72 functions as the Proton acceptor in the catalytic mechanism. Thr-102 provides a ligand contact to 1-deoxy-D-xylulose 5-phosphate. Residue His-189 is the Proton donor of the active site. Residues Gly-190 and 211 to 212 contribute to the 3-amino-2-oxopropyl phosphate site; that span reads GH.

This sequence belongs to the PNP synthase family. Homooctamer; tetramer of dimers.

The protein localises to the cytoplasm. The enzyme catalyses 3-amino-2-oxopropyl phosphate + 1-deoxy-D-xylulose 5-phosphate = pyridoxine 5'-phosphate + phosphate + 2 H2O + H(+). Its pathway is cofactor biosynthesis; pyridoxine 5'-phosphate biosynthesis; pyridoxine 5'-phosphate from D-erythrose 4-phosphate: step 5/5. In terms of biological role, catalyzes the complicated ring closure reaction between the two acyclic compounds 1-deoxy-D-xylulose-5-phosphate (DXP) and 3-amino-2-oxopropyl phosphate (1-amino-acetone-3-phosphate or AAP) to form pyridoxine 5'-phosphate (PNP) and inorganic phosphate. This Ehrlichia canis (strain Jake) protein is Pyridoxine 5'-phosphate synthase.